The chain runs to 349 residues: MLLSFLPLLPLATAALTYRGADISSLLIEEDAGIAYKNLNGQTQALESILADNGVNSIRQRLWVNPSDGSYDLDYNLKLAKRAKAAGMSVYLDLHYSDTWADPSHQTTPAGWSTDDIGTLAWQVYNYTKEVCDTFAANDIALEMVSIGNEIRNGLLWPLGATDSYPNIARLLHSGAWGVKDSALATTPQILLHLDNGWDWAAQKYFYDTVLAAGSELTSADFDLIGVSYYPFYNADATLSALKTSLGNLASAYGKKVLVVETNWPVACPNPEYQFPADLADIPFSVDGQSTFLRRLGEVVAGTDGGAGVYYWEPAWTKNAGLGSSCQDNLLVDYNTDQVRASISALGGI.

Positions 1–15 (MLLSFLPLLPLATAA) are cleaved as a signal peptide. Asn-126 carries N-linked (GlcNAc...) asparagine glycosylation. Glu-150 serves as the catalytic Proton donor. Glu-261 functions as the Nucleophile in the catalytic mechanism.

Belongs to the glycosyl hydrolase 53 family.

The protein resides in the secreted. It carries out the reaction The enzyme specifically hydrolyzes (1-&gt;4)-beta-D-galactosidic linkages in type I arabinogalactans.. Its function is as follows. Endogalactanase involved in the degradation of plant cell wall polysaccharides, and more particularly of hairy regions of pectin. This is Probable arabinogalactan endo-beta-1,4-galactanase A (galA) from Aspergillus terreus (strain NIH 2624 / FGSC A1156).